We begin with the raw amino-acid sequence, 433 residues long: Glutamyl-tRNA reductase (433 aa).

Substrate-binding positions include 49–52 (TCNR), serine 114, 119–121 (EPQ), and glutamine 125. Cysteine 50 acts as the Nucleophile in catalysis. 201 to 206 (GAGETI) contributes to the NADP(+) binding site.

The protein belongs to the glutamyl-tRNA reductase family. In terms of assembly, homodimer.

The enzyme catalyses (S)-4-amino-5-oxopentanoate + tRNA(Glu) + NADP(+) = L-glutamyl-tRNA(Glu) + NADPH + H(+). It functions in the pathway porphyrin-containing compound metabolism; protoporphyrin-IX biosynthesis; 5-aminolevulinate from L-glutamyl-tRNA(Glu): step 1/2. Functionally, catalyzes the NADPH-dependent reduction of glutamyl-tRNA(Glu) to glutamate 1-semialdehyde (GSA). This Histophilus somni (strain 2336) (Haemophilus somnus) protein is Glutamyl-tRNA reductase.